Reading from the N-terminus, the 317-residue chain is Uridine phosphorylase 2 (317 aa).

Phosphate contacts are provided by residues glycine 66, arginine 100, and arginine 144–threonine 147. Cysteines 95 and 102 form a disulfide. Uridine-binding positions include serine 148–glycine 149 and glutamine 223–arginine 225.

Belongs to the PNP/UDP phosphorylase family. Homodimer. Predominantly expressed in kidney.

The enzyme catalyses uridine + phosphate = alpha-D-ribose 1-phosphate + uracil. It catalyses the reaction 2'-deoxyuridine + phosphate = 2-deoxy-alpha-D-ribose 1-phosphate + uracil. It functions in the pathway pyrimidine metabolism; UMP biosynthesis via salvage pathway; uracil from uridine (phosphorylase route): step 1/1. Its activity is regulated as follows. A conditional disulfide bridge can form within the protein that dislocates a critical phosphate-coordinating arginine Arg-100 away from the active site, disabling the enzyme. Catalyzes the reversible phosphorylytic cleavage of uridine to uracil and ribose-1-phosphate which can then be utilized as carbon and energy sources or in the rescue of pyrimidine bases for nucleotide synthesis. Shows broad substrate specificity and can also accept deoxyuridine and other analogous compounds. This is Uridine phosphorylase 2 from Homo sapiens (Human).